The primary structure comprises 370 residues: 4-hydroxy-3-methylbut-2-en-1-yl diphosphate synthase (flavodoxin) (370 aa).

Residues cysteine 265, cysteine 268, cysteine 300, and glutamate 307 each contribute to the [4Fe-4S] cluster site.

The protein belongs to the IspG family. Requires [4Fe-4S] cluster as cofactor.

The catalysed reaction is (2E)-4-hydroxy-3-methylbut-2-enyl diphosphate + oxidized [flavodoxin] + H2O + 2 H(+) = 2-C-methyl-D-erythritol 2,4-cyclic diphosphate + reduced [flavodoxin]. Its pathway is isoprenoid biosynthesis; isopentenyl diphosphate biosynthesis via DXP pathway; isopentenyl diphosphate from 1-deoxy-D-xylulose 5-phosphate: step 5/6. Converts 2C-methyl-D-erythritol 2,4-cyclodiphosphate (ME-2,4cPP) into 1-hydroxy-2-methyl-2-(E)-butenyl 4-diphosphate. This Symbiobacterium thermophilum (strain DSM 24528 / JCM 14929 / IAM 14863 / T) protein is 4-hydroxy-3-methylbut-2-en-1-yl diphosphate synthase (flavodoxin).